A 928-amino-acid chain; its full sequence is DENN domain-containing protein 2C (928 aa).

2 disordered regions span residues 67-105 (KSKN…YDDT) and 245-266 (QSSL…IRGR). Residues 85–105 (ENTKSHDQSENENKKHEYDDT) are compositionally biased toward basic and acidic residues. Residue Ser-271 is modified to Phosphoserine. Residues 428-456 (KLHSYTGKELPPTKGETSGNESDAEYLPK) are disordered. The uDENN domain maps to 492–641 (ELFVVVSLQK…PFPAPGRTIT (150 aa)). The 134-residue stretch at 663-796 (RLEHVDFKCL…LQAALMQILE (134 aa)) folds into the cDENN domain. The dDENN domain occupies 798–888 (RNEILTQEQN…QDRELRKSGV (91 aa)).

Its function is as follows. Guanine nucleotide exchange factor (GEF) which may activate RAB9A and RAB9B. Promotes the exchange of GDP to GTP, converting inactive GDP-bound Rab proteins into their active GTP-bound form. This chain is DENN domain-containing protein 2C (DENND2C), found in Homo sapiens (Human).